We begin with the raw amino-acid sequence, 264 residues long: MMPEIEILEEKDFKIKFILKNASPALANSFRRAMKAEVPAMAVDYVDIYLNSSYFYDEVIAHRLAMLPIKTYLDRFNMQSECSCGGEGCPNCQISFRLNVEGPKVVYSGDFISDDPDVVFAIDNIPVLELFEGQQLMLEAVARLGTGREHAKFQPVSVCVYKIIPEIVVNENCNGCGDCIEACPRNVFEKDGDKVRVKNVMACSMCGECVEVCEMNAISVNETNNFLFTVEGTGALPVREVMKKALEILRSKAEEMNKIIEEIQ.

[3Fe-4S] cluster contacts are provided by C203, C206, and C209.

This sequence belongs to the archaeal Rpo3/eukaryotic RPB3 RNA polymerase subunit family. In terms of assembly, part of the RNA polymerase complex. [3Fe-4S] cluster is required as a cofactor.

It is found in the cytoplasm. The enzyme catalyses RNA(n) + a ribonucleoside 5'-triphosphate = RNA(n+1) + diphosphate. Its function is as follows. DNA-dependent RNA polymerase (RNAP) catalyzes the transcription of DNA into RNA using the four ribonucleoside triphosphates as substrates. This chain is DNA-directed RNA polymerase subunit Rpo3, found in Archaeoglobus fulgidus (strain ATCC 49558 / DSM 4304 / JCM 9628 / NBRC 100126 / VC-16).